Reading from the N-terminus, the 203-residue chain is MRGKFITIEGVEGSGKTTQIQYIARYLTEKNIPHIITREPGGTALGKKIRELLLNPSYPVVPEAEILLYLADRAQHVGEKIIPHLDKGVWVISDRYFDSTLAYQGYGRGFDLTLLKSFIAFATKGLIPDLTVLIDLPPEVGLSRVKGRGEYDRLERETLEFHQRVREGFLQLARDQRFRVVDGRKKPEEIFWEIKGFLEGLNG.

10 to 17 provides a ligand contact to ATP; the sequence is GVEGSGKT.

Belongs to the thymidylate kinase family.

The catalysed reaction is dTMP + ATP = dTDP + ADP. Functionally, phosphorylation of dTMP to form dTDP in both de novo and salvage pathways of dTTP synthesis. The sequence is that of Thymidylate kinase from Carboxydothermus hydrogenoformans (strain ATCC BAA-161 / DSM 6008 / Z-2901).